Here is a 37-residue protein sequence, read N- to C-terminus: Large ribosomal subunit protein bL36 (37 aa).

The protein belongs to the bacterial ribosomal protein bL36 family.

The sequence is that of Large ribosomal subunit protein bL36 (rpmJ) from Mycobacterium tuberculosis (strain ATCC 25618 / H37Rv).